A 151-amino-acid polypeptide reads, in one-letter code: Zinc finger HIT domain-containing protein 3 (151 aa).

Residues Cys11, Cys14, Cys22, Cys25, Cys30, Cys34, His38, and Cys42 each contribute to the Zn(2+) site. The HIT-type zinc finger occupies 11 to 42; sequence CVVCLEKPKYRCPTCRVPYCSVPCFQKHKEQC. Over residues 43 to 53 the composition is skewed to basic and acidic residues; the sequence is SSEARPVEKRR. Residues 43 to 81 form a disordered region; it reads SSEARPVEKRRAGPPVRSEESKDDDSSVADFLNSDEEED. Over residues 63-81 the composition is skewed to acidic residues; the sequence is SKDDDSSVADFLNSDEEED. Ser76 is modified (phosphoserine).

Thyroid receptor interacting proteins (TRIPs) specifically interact with the ligand binding domain of the thyroid receptor (TR). Requires the presence of thyroid hormone for its interaction. Interacts with NUFIP1. Interacts (via HIT-type zinc finger) with the RUVBL1/RUVBL2 complex in the presence of ADP. Expressed in the cerebellum.

The protein localises to the cytoplasm. It localises to the nucleus. The protein is Zinc finger HIT domain-containing protein 3 (Znhit3) of Mus musculus (Mouse).